The sequence spans 301 residues: MCRMSFKKETPLANAAFWAARRGNLALLKLLLNSGRVDVDCRDSHGTTLLMVAAYAGHIDCVRELVLQGADINLQRESGTTALFFAAQQGHNDVVRFLFGFGASTEFRTKDGGTALLAASQYGHMQVVETLLKHGANIHDQLYDGATALFLAAQGGYLDVIRLLLASGAKVNQPRQDGTAPLWIASQMGHSEVVRVMLLRGADRDAARNDGTTALLKAANKGYNDVIKELLKFSPTLGILKNGTSALHAAVLSGNIKTVALLLEAGADPSLRNKANELPAELTKNERILRLLRSKEGPRKS.

ANK repeat units lie at residues 11–41 (PLANAAFWAARRGNLALLKLLLNSGRVDVDC), 45–74 (HGTTLLMVAAYAGHIDCVRELVLQGADINL), 78–107 (SGTTALFFAAQQGHNDVVRFLFGFGASTEF), 111–140 (DGGTALLAASQYGHMQVVETLLKHGANIHD), 144–173 (DGATALFLAAQGGYLDVIRLLLASGAKVNQ), 177–206 (DGTAPLWIASQMGHSEVVRVMLLRGADRDA), 210–239 (DGTTALLKAANKGYNDVIKELLKFSPTLGI), and 242–271 (NGTSALHAAVLSGNIKTVALLLEAGADPSL).

The chain is Ankyrin repeat domain-containing protein 29 (ANKRD29) from Homo sapiens (Human).